The following is a 250-amino-acid chain: MTPDDPRDASDASLADATADSASRGHGSFFGRRKGHKLRAHQAELIADLLPQLSFDLAAPPPADLRALFEPGVDQVKLEIGFGGGEHLVAEAEAHPATGFIGCEPYVNGMAKILAQIEARGIRNIRLFAGDAAELLAWAPKASLARIDLIHPDPWPKRRHWKRRFVQDATVTAMARALRDDGEFRFVCDIDDYSAWTLSHLTRSPDFAWTAERARDWQNPFAGYTMTRYGRKAEREGRRAAYLHFQRNAA.

Residues 1-10 show a composition bias toward basic and acidic residues; the sequence is MTPDDPRDAS. Positions 1 to 30 are disordered; sequence MTPDDPRDASDASLADATADSASRGHGSFF. The span at 11–24 shows a compositional bias: low complexity; the sequence is DASLADATADSASR. Positions 79, 104, 131, and 153 each coordinate S-adenosyl-L-methionine. Aspartate 153 is a catalytic residue. Substrate contacts are provided by lysine 157 and aspartate 189.

The protein belongs to the class I-like SAM-binding methyltransferase superfamily. TrmB family.

The catalysed reaction is guanosine(46) in tRNA + S-adenosyl-L-methionine = N(7)-methylguanosine(46) in tRNA + S-adenosyl-L-homocysteine. The protein operates within tRNA modification; N(7)-methylguanine-tRNA biosynthesis. Functionally, catalyzes the formation of N(7)-methylguanine at position 46 (m7G46) in tRNA. The sequence is that of tRNA (guanine-N(7)-)-methyltransferase from Rhodopseudomonas palustris (strain BisA53).